We begin with the raw amino-acid sequence, 156 residues long: Probable cyclic pyranopterin monophosphate synthase (156 aa).

Residues 73–75 (MCH) and 109–110 (ME) contribute to the substrate site. D124 is a catalytic residue.

It belongs to the MoaC family. Homohexamer; trimer of dimers.

The enzyme catalyses (8S)-3',8-cyclo-7,8-dihydroguanosine 5'-triphosphate = cyclic pyranopterin phosphate + diphosphate. The protein operates within cofactor biosynthesis; molybdopterin biosynthesis. Catalyzes the conversion of (8S)-3',8-cyclo-7,8-dihydroguanosine 5'-triphosphate to cyclic pyranopterin monophosphate (cPMP). The polypeptide is Probable cyclic pyranopterin monophosphate synthase (Archaeoglobus fulgidus (strain ATCC 49558 / DSM 4304 / JCM 9628 / NBRC 100126 / VC-16)).